Consider the following 609-residue polypeptide: Arginine--tRNA ligase (609 aa).

The 'HIGH' region motif lies at 132-142; sequence ANPTSSLHVGH.

It belongs to the class-I aminoacyl-tRNA synthetase family. Monomer.

The protein resides in the cytoplasm. It catalyses the reaction tRNA(Arg) + L-arginine + ATP = L-arginyl-tRNA(Arg) + AMP + diphosphate. This is Arginine--tRNA ligase from Psychrobacter arcticus (strain DSM 17307 / VKM B-2377 / 273-4).